The following is a 350-amino-acid chain: Protein RecA (350 aa).

65–72 lines the ATP pocket; it reads GPESSGKT. The interval 329–350 is disordered; that stretch reads ASPDVKANPVKETEDDMADADI. A compositionally biased stretch (acidic residues) spans 341–350; it reads TEDDMADADI.

It belongs to the RecA family.

Its subcellular location is the cytoplasm. Functionally, can catalyze the hydrolysis of ATP in the presence of single-stranded DNA, the ATP-dependent uptake of single-stranded DNA by duplex DNA, and the ATP-dependent hybridization of homologous single-stranded DNAs. It interacts with LexA causing its activation and leading to its autocatalytic cleavage. The chain is Protein RecA from Pseudomonas fluorescens (strain ATCC BAA-477 / NRRL B-23932 / Pf-5).